Reading from the N-terminus, the 328-residue chain is Tryptophan--tRNA ligase (328 aa).

ATP is bound by residues 9 to 11 (QPS) and 17 to 18 (GN). Positions 10–18 (PSGVITIGN) match the 'HIGH' region motif. Asp132 is a binding site for L-tryptophan. ATP is bound by residues 144 to 146 (GED), Ile183, and 192 to 196 (KMSKS). Residues 192–196 (KMSKS) carry the 'KMSKS' region motif.

It belongs to the class-I aminoacyl-tRNA synthetase family. As to quaternary structure, homodimer.

It is found in the cytoplasm. The catalysed reaction is tRNA(Trp) + L-tryptophan + ATP = L-tryptophyl-tRNA(Trp) + AMP + diphosphate + H(+). Its activity is regulated as follows. Inhibited by indolmycin, a competitive inhibitor for tryptophan. Catalyzes the attachment of tryptophan to tRNA(Trp). The sequence is that of Tryptophan--tRNA ligase from Geobacillus stearothermophilus (Bacillus stearothermophilus).